The chain runs to 173 residues: Small ribosomal subunit protein uS5 (173 aa).

Positions 18 to 81 constitute an S5 DRBM domain; that stretch reads LREKMIAVNR…EQARRGMFKV (64 aa).

This sequence belongs to the universal ribosomal protein uS5 family. Part of the 30S ribosomal subunit. Contacts proteins S4 and S8.

With S4 and S12 plays an important role in translational accuracy. Its function is as follows. Located at the back of the 30S subunit body where it stabilizes the conformation of the head with respect to the body. The chain is Small ribosomal subunit protein uS5 from Bordetella avium (strain 197N).